The primary structure comprises 2339 residues: MVRFGDELGGRYGGPGGGERARGGGAGGAGGPGPGGLQPGQRVLYKQSIAQRARTMALYNPIPVKQNCFTVNRSLFVFSEDNVVRKYAKRITEWPPFEYMILATIIANCIVLALEQHLPDGDKTPMSERLDDTEPYFIGIFCFEAGIKIIALGFVFHKGSYLRNGWNVMDFVVVLTGILATAGTDFDLRTLRAVRVLRPLKLVSGIPSLQVVLKSIMKAMVPLLQIGLLLFFAILMFAIIGLEFYMGKFHKACFPNSTDAEPVGDFPCGKEAPARLCEGDTECREYWPGPNFGITNFDNILFAILTVFQCITMEGWTDILYNTNDAAGNTWNWLYFIPLIIIGSFFMLNLVLGVLSGEFAKERERVENRRAFLKLRRQQQIERELNGYLEWIFKAEEVMLAEEDRNAEEKSPLDVLKRAATKKSRNDLIHAEEGEDRFADLCAVGSPFARASLKSGKTESSSYFRRKEKMFRFFIRRMVKAQSFYWVVLCVVALNTLCVAMVHYNQPRRLTTTLYFAEFVFLGLFLTEMSLKMYGLGPRSYFRSSFNCFDFGVIVGSVFEVVWAAIKPGSSFGISVLRALRLLRIFKVTKYWSSLRNLVVSLLNSMKSIISLLFLLFLFIVVFALLGMQLFGGQFNFQDETPTTNFDTFPAAILTVFQILTGEDWNAVMYHGIESQGGVSKGMFSSFYFIVLTLFGNYTLLNVFLAIAVDNLANAQELTKDEEEMEEAANQKLALQKAKEVAEVSPMSAANISIAARQQNSAKARSVWEQRASQLRLQNLRASCEALYSEMDPEERLRFATTRHLRPDMKTHLDRPLVVELGRDGARGPVGGKARPEAAEAPEGVDPPRRHHRHRDKDKTPAAGDQDRAEAPKAESGEPGAREERPRPHRSHSKEAAGPPEARSERGRGPGPEGGRRHHRRGSPEEAAEREPRRHRAHRHQDPSKECAGAKGERRARHRGGPRAGPREAESGEEPARRHRARHKAQPAHEAVEKETTEKEATEKEAEIVEADKEKELRNHQPREPHCDLETSGTVTVGPMHTLPSTCLQKVEEQPEDADNQRNVTRMGSQPPDPNTIVHIPVMLTGPLGEATVVPSGNVDLESQAEGKKEVEADDVMRSGPRPIVPYSSMFCLSPTNLLRRFCHYIVTMRYFEVVILVVIALSSIALAAEDPVRTDSPRNNALKYLDYIFTGVFTFEMVIKMIDLGLLLHPGAYFRDLWNILDFIVVSGALVAFAFSGSKGKDINTIKSLRVLRVLRPLKTIKRLPKLKAVFDCVVNSLKNVLNILIVYMLFMFIFAVIAVQLFKGKFFYCTDESKELERDCRGQYLDYEKEEVEAQPRQWKKYDFHYDNVLWALLTLFTVSTGEGWPMVLKHSVDATYEEQGPSPGYRMELSIFYVVYFVVFPFFFVNIFVALIIITFQEQGDKVMSECSLEKNERACIDFAISAKPLTRYMPQNRQSFQYKTWTFVVSPPFEYFIMAMIALNTVVLMMKFYDAPYEYELMLKCLNIVFTSMFSMECVLKIIAFGVLNYFRDAWNVFDFVTVLGSITDILVTEIAETNNFINLSFLRLFRAARLIKLLRQGYTIRILLWTFVQSFKALPYVCLLIAMLFFIYAIIGMQVFGNIALDDDTSINRHNNFRTFLQALMLLFRSATGEAWHEIMLSCLSNQACDEQANATECGSDFAYFYFVSFIFLCSFLMLNLFVAVIMDNFEYLTRDSSILGPHHLDEFIRVWAEYDPAACGRISYNDMFEMLKHMSPPLGLGKKCPARVAYKRLVRMNMPISNEDMTVHFTSTLMALIRTALEIKLAPAGTKQHQCDAELRKEISVVWANLPQKTLDLLVPPHKPDEMTVGKVYAALMIFDFYKQNKTTRDQMQQAPGGLSQMGPVSLFHPLKATLEQTQPAVLRGARVFLRQKSSTSLSNGGAIQNQESGIKESVSWGTQRTQDAPHEARPPLERGHSTEIPVGRSGALAVDVQMQSITRRGPDGEPQPGLESQGRAASMPRLAAETQPVTDASPMKRSISTLAQRPRGTHLCSTTPDRPPPSQASSHHHHHRCHRRRDRKQRSLEKGPSLSADMDGAPSSAVGPGLPPGEGPTGCRRERERRQERGRSQERRQPSSSSSEKQRFYSCDRFGGREPPKPKPSLSSHPTSPTAGQEPGPHPQGSGSVNGSPLLSTSGASTPGRGGRRQLPQTPLTPRPSITYKTANSSPIHFAGAQTSLPAFSPGRLSRGLSEHNALLQRDPLSQPLAPGSRIGSDPYLGQRLDSEASVHALPEDTLTFEEAVATNSGRSSRTSYVSSLTSQSHPLRRVPNGYHCTLGLSSGGRARHSYHHPDQDHWC.

Residues 1–37 (MVRFGDELGGRYGGPGGGERARGGGAGGAGGPGPGGL) form a disordered region. Topologically, residues 1-90 (MVRFGDELGG…DNVVRKYAKR (90 aa)) are cytoplasmic. Residues 10-37 (GRYGGPGGGERARGGGAGGAGGPGPGGL) show a composition bias toward gly residues. Arginine 22 carries the omega-N-methylarginine modification. The stretch at 82-359 (NVVRKYAKRI…LVLGVLSGEF (278 aa)) is one I repeat. A helical transmembrane segment spans residues 91-114 (ITEWPPFEYMILATIIANCIVLAL). Residues 115 to 131 (EQHLPDGDKTPMSERLD) are Extracellular-facing. A helical transmembrane segment spans residues 132–152 (DTEPYFIGIFCFEAGIKIIAL). The Cytoplasmic portion of the chain corresponds to 153 to 163 (GFVFHKGSYLR). Residues 164-182 (NGWNVMDFVVVLTGILATA) form a helical membrane-spanning segment. At 183–187 (GTDFD) the chain is on the extracellular side. Residues 188 to 211 (LRTLRAVRVLRPLKLVSGIPSLQV) traverse the membrane as a helical segment. Topologically, residues 212–221 (VLKSIMKAMV) are cytoplasmic. Residues 222–244 (PLLQIGLLLFFAILMFAIIGLEF) form a helical membrane-spanning segment. Topologically, residues 245–331 (YMGKFHKACF…NTNDAAGNTW (87 aa)) are extracellular. Asparagine 256 carries N-linked (GlcNAc...) asparagine glycosylation. A helical transmembrane segment spans residues 332–356 (NWLYFIPLIIIGSFFMLNLVLGVLS). The Cytoplasmic portion of the chain corresponds to 357-482 (GEFAKERERV…FFIRRMVKAQ (126 aa)). The binding to the beta subunit stretch occupies residues 379–396 (QQIERELNGYLEWIFKAE). Serine 411 carries the phosphoserine modification. Residue 451 to 458 (ASLKSGKT) participates in ATP binding. The II repeat unit spans residues 468–712 (EKMFRFFIRR…VFLAIAVDNL (245 aa)). The chain crosses the membrane as a helical span at residues 483 to 501 (SFYWVVLCVVALNTLCVAM). At 502 to 511 (VHYNQPRRLT) the chain is on the extracellular side. A helical transmembrane segment spans residues 512 to 534 (TTLYFAEFVFLGLFLTEMSLKMY). Residues 535–544 (GLGPRSYFRS) lie on the Cytoplasmic side of the membrane. Serine 544 is an a 1,2-diacyl-sn-glycero-3-phospho-(1D-myo-inositol-4,5-bisphosphate) binding site. The helical transmembrane segment at 545–566 (SFNCFDFGVIVGSVFEVVWAAI) threads the bilayer. Over 567-573 (KPGSSFG) the chain is Extracellular. Residues 574 to 586 (ISVLRALRLLRIF) traverse the membrane as a helical segment. Positions 584 and 587 each coordinate a 1,2-diacyl-sn-glycero-3-phospho-(1D-myo-inositol-4,5-bisphosphate). Topologically, residues 587-604 (KVTKYWSSLRNLVVSLLN) are cytoplasmic. The helical transmembrane segment at 605 to 630 (SMKSIISLLFLLFLFIVVFALLGMQL) threads the bilayer. Residues 631–682 (FGGQFNFQDETPTTNFDTFPAAILTVFQILTGEDWNAVMYHGIESQGGVSKG) are Extracellular-facing. The chain crosses the membrane as a helical span at residues 683 to 709 (MFSSFYFIVLTLFGNYTLLNVFLAIAV). Residues 710–1151 (DNLANAQELT…FCHYIVTMRY (442 aa)) are Cytoplasmic-facing. Serine 745, serine 748, and serine 783 each carry phosphoserine. Basic and acidic residues-rich tracts occupy residues 816 to 826 (PLVVELGRDGA), 857 to 886 (KDKTPAAGDQDRAEAPKAESGEPGAREERP), 922 to 932 (GSPEEAAEREP), and 965 to 976 (GPREAESGEEPA). 2 disordered regions span residues 816–1038 (PLVV…VTVG) and 1054–1076 (QPEDADNQRNVTRMGSQPPDPNT). Residues 977–986 (RRHRARHKAQ) are compositionally biased toward basic residues. Residues 990–1029 (EAVEKETTEKEATEKEAEIVEADKEKELRNHQPREPHCDL) show a composition bias toward basic and acidic residues. Position 1069 is a phosphoserine (serine 1069). An III repeat occupies 1137–1419 (NLLRRFCHYI…IFVALIIITF (283 aa)). The chain crosses the membrane as a helical span at residues 1152–1170 (FEVVILVVIALSSIALAAE). Topologically, residues 1171 to 1178 (DPVRTDSP) are extracellular. The helical transmembrane segment at 1179 to 1203 (RNNALKYLDYIFTGVFTFEMVIKMI) threads the bilayer. The Cytoplasmic portion of the chain corresponds to 1204-1217 (DLGLLLHPGAYFRD). Residues 1218 to 1238 (LWNILDFIVVSGALVAFAFSG) form a helical membrane-spanning segment. The Extracellular portion of the chain corresponds to 1239–1244 (SKGKDI). Residues 1245–1265 (NTIKSLRVLRVLRPLKTIKRL) traverse the membrane as a helical segment. Topologically, residues 1266-1283 (PKLKAVFDCVVNSLKNVL) are cytoplasmic. Residues 1284–1303 (NILIVYMLFMFIFAVIAVQL) form a helical membrane-spanning segment. Residues 1304–1390 (FKGKFFYCTD…EQGPSPGYRM (87 aa)) are Extracellular-facing. A helical membrane pass occupies residues 1391–1416 (ELSIFYVVYFVVFPFFFVNIFVALII). Over 1417–1471 (ITFQEQGDKVMSECSLEKNERACIDFAISAKPLTRYMPQNRQSFQYKTWTFVVSP) the chain is Cytoplasmic. The stretch at 1456–1711 (NRQSFQYKTW…LFVAVIMDNF (256 aa)) is one IV repeat. A helical transmembrane segment spans residues 1472 to 1490 (PFEYFIMAMIALNTVVLMM). Residues 1491-1498 (KFYDAPYE) lie on the Extracellular side of the membrane. Residues 1499-1523 (YELMLKCLNIVFTSMFSMECVLKII) form a helical membrane-spanning segment. Over 1524 to 1533 (AFGVLNYFRD) the chain is Cytoplasmic. The helical transmembrane segment at 1534-1555 (AWNVFDFVTVLGSITDILVTEI) threads the bilayer. Residues 1556-1563 (AETNNFIN) lie on the Extracellular side of the membrane. N-linked (GlcNAc...) asparagine glycosylation is present at asparagine 1563. The chain crosses the membrane as a helical span at residues 1564 to 1582 (LSFLRLFRAARLIKLLRQG). Residues 1583–1601 (YTIRILLWTFVQSFKALPY) lie on the Cytoplasmic side of the membrane. Residues 1602–1621 (VCLLIAMLFFIYAIIGMQVF) traverse the membrane as a helical segment. Topologically, residues 1622–1683 (GNIALDDDTS…ANATECGSDF (62 aa)) are extracellular. Residue asparagine 1675 is glycosylated (N-linked (GlcNAc...) asparagine). Residues 1684–1707 (AYFYFVSFIFLCSFLMLNLFVAVI) traverse the membrane as a helical segment. Residues 1708–2339 (MDNFEYLTRD…YHHPDQDHWC (632 aa)) lie on the Cytoplasmic side of the membrane. Positions 1724–1759 (HHLDEFIRVWAEYDPAACGRISYNDMFEMLKHMSPP) constitute an EF-hand domain. Positions 1737, 1743, and 1748 each coordinate Ca(2+). A compositionally biased stretch (polar residues) spans 1916-1931 (SSTSLSNGGAIQNQES). 2 disordered regions span residues 1916–1968 (SSTS…VGRS) and 1981–2206 (TRRG…YKTA). Positions 1946 to 1960 (DAPHEARPPLERGHS) are enriched in basic and acidic residues. Residues 2049–2063 (SHHHHHRCHRRRDRK) are compositionally biased toward basic residues. Position 2066 is a phosphoserine (serine 2066). Over residues 2098–2116 (CRRERERRQERGRSQERRQ) the composition is skewed to basic and acidic residues. Residues 2143–2153 (PSLSSHPTSPT) are compositionally biased toward low complexity. The span at 2164–2180 (GSGSVNGSPLLSTSGAS) shows a compositional bias: polar residues. Phosphoserine occurs at positions 2224, 2233, and 2256.

Belongs to the calcium channel alpha-1 subunit (TC 1.A.1.11) family. CACNA1B subfamily. As to quaternary structure, multisubunit complex consisting of alpha-1, alpha-2, beta and delta subunits in a 1:1:1:1 ratio. The channel activity is directed by the pore-forming and voltage-sensitive alpha-1 subunit. In many cases, this subunit is sufficient to generate voltage-sensitive calcium channel activity. The auxiliary subunits beta and alpha-2/delta linked by a disulfide bridge regulate the channel activity. Interacts with RIMS1. Interacts with FMR1 (via C-terminus); this interaction induces a decrease in the number of presynaptic functional CACNA1B channels at the cell surface. Post-translationally, phosphorylated in vitro by CaM-kinase II, PKA, PKC and CGPK. Isoform Alpha-1b-1 and isoform Alpha-1b-2 are expressed in the central nervous system, but not in skeletal muscle or aorta. Expressed in the cerebral white matter, cortex, hippocampus, basal ganglia, and cerebellum.

The protein resides in the membrane. It carries out the reaction Ca(2+)(in) = Ca(2+)(out). Its activity is regulated as follows. Is specifically blocked by omega-conotoxin GVIA. Is specifically blocked by omega-conotoxin MVIIA (ziconotide). Is insensitive to dihydropyridines (DHP). With respect to regulation, is specifically blocked by omega-conotoxin MVIIA (ziconotide). Is insensitive to dihydropyridines (DHP). In terms of biological role, voltage-sensitive calcium channels (VSCC) mediate the entry of calcium ions into excitable cells and are also involved in a variety of calcium-dependent processes, including muscle contraction, hormone or neurotransmitter release, gene expression, cell motility, cell division and cell death. This alpha-1B subunit gives rise to N-type calcium currents. N-type calcium channels belong to the 'high-voltage activated' (HVA) group. They are involved in pain signaling. Calcium channels containing alpha-1B subunit may play a role in directed migration of immature neurons. Mediates Ca(2+) release probability at hippocampal neuronal soma and synaptic terminals. Voltage-sensitive calcium channels (VSCC) mediate the entry of calcium ions into excitable cells and are also involved in a variety of calcium-dependent processes, including muscle contraction, hormone or neurotransmitter release, gene expression, cell motility, cell division and cell death. This alpha-1B subunit gives rise to N-type calcium currents. This Homo sapiens (Human) protein is Voltage-dependent N-type calcium channel subunit alpha-1B (CACNA1B).